The primary structure comprises 401 residues: Ornithine aminotransferase (401 aa).

K258 carries the post-translational modification N6-(pyridoxal phosphate)lysine.

This sequence belongs to the class-III pyridoxal-phosphate-dependent aminotransferase family. OAT subfamily. It depends on pyridoxal 5'-phosphate as a cofactor.

Its subcellular location is the cytoplasm. It catalyses the reaction a 2-oxocarboxylate + L-ornithine = L-glutamate 5-semialdehyde + an L-alpha-amino acid. It participates in amino-acid biosynthesis; L-proline biosynthesis; L-glutamate 5-semialdehyde from L-ornithine: step 1/1. In terms of biological role, catalyzes the interconversion of ornithine to glutamate semialdehyde. This Bacillus subtilis (strain 168) protein is Ornithine aminotransferase.